The chain runs to 207 residues: Suppressor of IKBKE 1 (207 aa).

2 coiled-coil regions span residues 4–32 (TIDK…LIDQ) and 154–193 (DAIQ…SLHS). The tract at residues 186–207 (TSKESLHSSKRESEWNFSEKTQ) is disordered. Basic and acidic residues predominate over residues 189-199 (ESLHSSKRESE).

It belongs to the SIKE family. Interacts with IKBKE and TBK1 via its coiled coil region. Interaction with TBK1 is disrupted upon viral infection or TLR3 stimulation. Interacts with CDC42BPB. Associates with the STRIPAK core complex composed of PP2A catalytic and scaffolding subunits, the striatins (PP2A regulatory subunits), the striatin-associated proteins MOB4, STRIP1 and STRIP2, PDCD10 and members of the STE20 kinases, such as STK24 and STK26.

Suppressor of IKK-epsilon. Associates with the striatin-interacting phosphatase and kinase (STRIPAK) core complex, forming the extended (SIKE1:SLMAP)STRIPAK complex. The (SIKE1:SLMAP)STRIPAK complex dephosphorylates STK3 leading to the inhibition of Hippo signaling and the control of cell growth. This is Suppressor of IKBKE 1 (sike1) from Xenopus tropicalis (Western clawed frog).